The chain runs to 307 residues: Putative serine/threonine-protein phosphatase C22H10.04 (307 aa).

Positions 51, 53, 79, and 111 each coordinate Mn(2+). The active-site Proton donor is His112. 2 residues coordinate Mn(2+): His161 and His236.

It belongs to the PPP phosphatase family. PP-X subfamily. The cofactor is Mn(2+).

It catalyses the reaction O-phospho-L-seryl-[protein] + H2O = L-seryl-[protein] + phosphate. It carries out the reaction O-phospho-L-threonyl-[protein] + H2O = L-threonyl-[protein] + phosphate. The sequence is that of Putative serine/threonine-protein phosphatase C22H10.04 from Schizosaccharomyces pombe (strain 972 / ATCC 24843) (Fission yeast).